A 515-amino-acid chain; its full sequence is MTTEPGYLSPSVAVATSMPKRGVGAAVLIVPVVSTGEEDRPGAVVASAEPFLRADTVAEIEAGLRALDATGASDQVHRLAVPSLPVGSVLTVGLGKPRREWPADTIRCAAGVAARALNSSEAVITTLAELPGDGICSATVEGLILGSYRFSAFRSDKTAPKDAGLRKITVLCCAKDAKKRALHGAAVATAVATARDLVNTPPSHLFPAELAKRAKTLSESVGLDVEVIDEKALKKAGYGGVIGVGQGSSRPPRLVRLIHRGSRLAKNPQKAKKVALVGKGITFDTGGISIKPAASMHHMTSDMGGAAAVIATVTLAARLRLPIDVIATVPMAENMPSATAQRPGDVLTQYGGTTVEVLNTDAEGRLILADAIVRACEDKPDYLIETSTLTGAQTVALGTRIPGVMGSDEFRDRVAAISQRVGENGWPMPLPDDLKDDLKSTVADLANVSGQRFAGMLVAGVFLREFVAESVDWAHIDVAGPAYNTGSAWGYTPKGATGVPTRTMFAVLEDIAKNG.

Residues K279 and D284 each coordinate Mn(2+). K291 is a catalytic residue. Positions 302, 361, and 363 each coordinate Mn(2+). R365 is a catalytic residue.

The protein belongs to the peptidase M17 family. Mn(2+) is required as a cofactor.

It localises to the cytoplasm. It catalyses the reaction Release of an N-terminal amino acid, Xaa-|-Yaa-, in which Xaa is preferably Leu, but may be other amino acids including Pro although not Arg or Lys, and Yaa may be Pro. Amino acid amides and methyl esters are also readily hydrolyzed, but rates on arylamides are exceedingly low.. The enzyme catalyses Release of an N-terminal amino acid, preferentially leucine, but not glutamic or aspartic acids.. Functionally, presumably involved in the processing and regular turnover of intracellular proteins. Catalyzes the removal of unsubstituted N-terminal amino acids from various peptides. The polypeptide is Probable cytosol aminopeptidase (Mycobacterium bovis (strain ATCC BAA-935 / AF2122/97)).